The chain runs to 544 residues: Probable protein kinase UbiB (544 aa).

Residues 123-500 (DFDEKALASA…RNKQRKSQYL (378 aa)) form the Protein kinase domain. ATP is bound by residues 129–137 (LASASIAQV) and lysine 152. Aspartate 286 acts as the Proton acceptor in catalysis. A run of 2 helical transmembrane segments spans residues 499–519 (YLLGIGATLILCGSLFFISAS) and 522–542 (MAIAFMSAGALSWIIGWYKSG).

The protein belongs to the ABC1 family. UbiB subfamily.

It localises to the cell inner membrane. The protein operates within cofactor biosynthesis; ubiquinone biosynthesis [regulation]. Functionally, is probably a protein kinase regulator of UbiI activity which is involved in aerobic coenzyme Q (ubiquinone) biosynthesis. Required for the expression of 2'-N-acetyltransferase. This is Probable protein kinase UbiB from Providencia stuartii.